A 64-amino-acid chain; its full sequence is Conotoxin reg3.16 (64 aa).

Positions 1 to 19 (MSKLGVFLTICLLLFPLTA) are cleaved as a signal peptide. Positions 20–49 (LQLDGDQPADKPAQRKLKILPKRKHWTRFT) are excised as a propeptide. Cystine bridges form between C50–C64, C51–C60, and C56–C63.

The protein belongs to the conotoxin M superfamily. As to expression, expressed by the venom duct.

The protein resides in the secreted. This chain is Conotoxin reg3.16, found in Conus regius (Crown cone).